We begin with the raw amino-acid sequence, 312 residues long: Glyoxylate/hydroxypyruvate reductase A (312 aa).

Residue R227 is part of the active site. Catalysis depends on H275, which acts as the Proton donor.

Belongs to the D-isomer specific 2-hydroxyacid dehydrogenase family. GhrA subfamily.

It is found in the cytoplasm. The enzyme catalyses glycolate + NADP(+) = glyoxylate + NADPH + H(+). The catalysed reaction is (R)-glycerate + NAD(+) = 3-hydroxypyruvate + NADH + H(+). It carries out the reaction (R)-glycerate + NADP(+) = 3-hydroxypyruvate + NADPH + H(+). Catalyzes the NADPH-dependent reduction of glyoxylate and hydroxypyruvate into glycolate and glycerate, respectively. The chain is Glyoxylate/hydroxypyruvate reductase A from Salmonella agona (strain SL483).